Consider the following 76-residue polypeptide: Toxin Acra III-1 (76 aa).

One can recognise an LCN-type CS-alpha/beta domain in the interval 4 to 67; it reads PGNYPLDTRG…IWDAVKNHCT (64 aa). Disulfide bonds link C18/C41, C27/C46, and C31/C48.

The protein belongs to the long (3 C-C) scorpion toxin superfamily. Sodium channel inhibitor family. Beta subfamily. As to expression, expressed by the venom gland.

The protein resides in the secreted. Its function is as follows. Binds to sodium channels (Nav) and affects the channel activation process. In Androctonus crassicauda (Arabian fat-tailed scorpion), this protein is Toxin Acra III-1.